The sequence spans 264 residues: MEQYLELCRHVLEHGTERSDRTGTGTISVFGYQMRFDLQEGFPVVTTKKLHLRSIIHELLWFLKGETNIAYLQENGVRIWNEWADENGELGPVYGKQWRSWEGANGKTVDQISQVVEAIKHQPDSRRLIVSAWNAAEIEDMALAPCHCLFQFYVQDGKLSCQLYQRSADIFLGVPFNIASYALLTKMIAQVCDLEEGEFVHTFGDAHIYLNHIEQVKLQLTREPRPLPEMRLNPEVRSLFDFTFDDFELVGYDPHPHIKGEVSV.

Arg21 serves as a coordination point for dUMP. His51 lines the (6R)-5,10-methylene-5,6,7,8-tetrahydrofolate pocket. Position 126–127 (126–127) interacts with dUMP; that stretch reads RR. Residue Cys146 is the Nucleophile of the active site. DUMP contacts are provided by residues 166-169, Asn177, and 207-209; these read RSAD and HIY. Asp169 provides a ligand contact to (6R)-5,10-methylene-5,6,7,8-tetrahydrofolate. (6R)-5,10-methylene-5,6,7,8-tetrahydrofolate is bound at residue Ser263.

Belongs to the thymidylate synthase family. Bacterial-type ThyA subfamily. Homodimer.

Its subcellular location is the cytoplasm. It catalyses the reaction dUMP + (6R)-5,10-methylene-5,6,7,8-tetrahydrofolate = 7,8-dihydrofolate + dTMP. Its pathway is pyrimidine metabolism; dTTP biosynthesis. Functionally, catalyzes the reductive methylation of 2'-deoxyuridine-5'-monophosphate (dUMP) to 2'-deoxythymidine-5'-monophosphate (dTMP) while utilizing 5,10-methylenetetrahydrofolate (mTHF) as the methyl donor and reductant in the reaction, yielding dihydrofolate (DHF) as a by-product. This enzymatic reaction provides an intracellular de novo source of dTMP, an essential precursor for DNA biosynthesis. The chain is Thymidylate synthase from Halalkalibacterium halodurans (strain ATCC BAA-125 / DSM 18197 / FERM 7344 / JCM 9153 / C-125) (Bacillus halodurans).